Here is a 670-residue protein sequence, read N- to C-terminus: DNA ligase (670 aa).

NAD(+) contacts are provided by residues 33-37, 82-83, and Glu-114; these read DAEYD and SL. Lys-116 acts as the N6-AMP-lysine intermediate in catalysis. Residues Arg-137, Glu-174, Lys-291, and Lys-315 each contribute to the NAD(+) site. Positions 409, 412, 427, and 433 each coordinate Zn(2+). Positions 593–670 constitute a BRCT domain; sequence GVELPLEGKT…TEQDLLNLMK (78 aa).

It belongs to the NAD-dependent DNA ligase family. LigA subfamily. Requires Mg(2+) as cofactor. The cofactor is Mn(2+).

The enzyme catalyses NAD(+) + (deoxyribonucleotide)n-3'-hydroxyl + 5'-phospho-(deoxyribonucleotide)m = (deoxyribonucleotide)n+m + AMP + beta-nicotinamide D-nucleotide.. Functionally, DNA ligase that catalyzes the formation of phosphodiester linkages between 5'-phosphoryl and 3'-hydroxyl groups in double-stranded DNA using NAD as a coenzyme and as the energy source for the reaction. It is essential for DNA replication and repair of damaged DNA. In Vibrio campbellii (strain ATCC BAA-1116), this protein is DNA ligase.